The chain runs to 211 residues: Protein-L-isoaspartate O-methyltransferase (211 aa).

Ser60 is an active-site residue.

This sequence belongs to the methyltransferase superfamily. L-isoaspartyl/D-aspartyl protein methyltransferase family.

It localises to the cytoplasm. It carries out the reaction [protein]-L-isoaspartate + S-adenosyl-L-methionine = [protein]-L-isoaspartate alpha-methyl ester + S-adenosyl-L-homocysteine. Catalyzes the methyl esterification of L-isoaspartyl residues in peptides and proteins that result from spontaneous decomposition of normal L-aspartyl and L-asparaginyl residues. It plays a role in the repair and/or degradation of damaged proteins. This is Protein-L-isoaspartate O-methyltransferase from Ectopseudomonas mendocina (strain ymp) (Pseudomonas mendocina).